A 267-amino-acid chain; its full sequence is Glutamate racemase (267 aa).

Substrate is bound by residues 9–10 and 41–42; these read DS and YS. Cysteine 73 serves as the catalytic Proton donor/acceptor. 74 to 75 contacts substrate; sequence NT. The Proton donor/acceptor role is filled by cysteine 184. A substrate-binding site is contributed by 185-186; it reads TH.

The protein belongs to the aspartate/glutamate racemases family.

The catalysed reaction is L-glutamate = D-glutamate. Its pathway is cell wall biogenesis; peptidoglycan biosynthesis. Its function is as follows. Provides the (R)-glutamate required for cell wall biosynthesis. The sequence is that of Glutamate racemase from Glaesserella parasuis serovar 5 (strain SH0165) (Haemophilus parasuis).